The sequence spans 294 residues: Diaminopimelate epimerase (294 aa).

2 residues coordinate substrate: Asn11 and Asn78. Cys87 acts as the Proton donor in catalysis. Substrate contacts are provided by residues 88 to 89 (GN), Asn167, Asn203, and 221 to 222 (ER). The active-site Proton acceptor is Cys230. 231–232 (GT) is a substrate binding site.

This sequence belongs to the diaminopimelate epimerase family. In terms of assembly, homodimer.

It is found in the cytoplasm. It carries out the reaction (2S,6S)-2,6-diaminopimelate = meso-2,6-diaminopimelate. The protein operates within amino-acid biosynthesis; L-lysine biosynthesis via DAP pathway; DL-2,6-diaminopimelate from LL-2,6-diaminopimelate: step 1/1. Its function is as follows. Catalyzes the stereoinversion of LL-2,6-diaminopimelate (L,L-DAP) to meso-diaminopimelate (meso-DAP), a precursor of L-lysine and an essential component of the bacterial peptidoglycan. The protein is Diaminopimelate epimerase of Mycolicibacterium paratuberculosis (strain ATCC BAA-968 / K-10) (Mycobacterium paratuberculosis).